A 246-amino-acid polypeptide reads, in one-letter code: Agamous-like MADS-box protein AGL5 (246 aa).

An MADS-box domain is found at 18-72 (RGKIEIKRIENTTNRQVTFCKRRNGLLKKAYELSVLCDAEVALVIFSTRGRLYEY). The 91-residue stretch at 102 to 192 (TQYYQQEASK…RSKITERTGL (91 aa)) folds into the K-box domain.

In terms of assembly, interacts with AGL15 and AGL16.

The protein resides in the nucleus. Probable transcription factor. Interacts genetically with TT16/AGL32 in a partially antagonistic manner during flower development. Is essential for the coordination of cell divisions in ovule, seed coat development and endosperm formation. This chain is Agamous-like MADS-box protein AGL5 (AGL5), found in Arabidopsis thaliana (Mouse-ear cress).